A 163-amino-acid polypeptide reads, in one-letter code: Ribonuclease P protein component (163 aa).

The interval 1-68 (MDEKDVATQP…GGKLLSLKGD (68 aa)) is disordered. The span at 8–19 (TQPQETGQNPRL) shows a compositional bias: polar residues.

The protein belongs to the RnpA family. Consists of a catalytic RNA component (M1 or rnpB) and a protein subunit.

The enzyme catalyses Endonucleolytic cleavage of RNA, removing 5'-extranucleotides from tRNA precursor.. Its function is as follows. RNaseP catalyzes the removal of the 5'-leader sequence from pre-tRNA to produce the mature 5'-terminus. It can also cleave other RNA substrates such as 4.5S RNA. The protein component plays an auxiliary but essential role in vivo by binding to the 5'-leader sequence and broadening the substrate specificity of the ribozyme. This Thermus thermophilus (strain ATCC BAA-163 / DSM 7039 / HB27) protein is Ribonuclease P protein component.